The sequence spans 361 residues: NAD-dependent protein deacetylase hst2-1 (361 aa).

One can recognise a Deacetylase sirtuin-type domain in the interval 16 to 276 (SVLEARTVEA…RKLARALGWE (261 aa)). NAD(+)-binding positions include 43–63 (GAGI…TGIY) and 126–129 (QNID). His146 functions as the Proton acceptor in the catalytic mechanism. 4 residues coordinate Zn(2+): Cys154, Cys157, Cys178, and Cys181. Residues 217–219 (GTS), 242–244 (NRE), and Cys262 contribute to the NAD(+) site. Residues 294 to 328 (EEELATPRTREERLENEISRLTAEIDKTLKISDAY) are a coiled coil. The interval 335–361 (RLEGEPLSSPESNGTGLAHVFPHLARR) is disordered.

Belongs to the sirtuin family. Class I subfamily. Requires Zn(2+) as cofactor.

It localises to the cytoplasm. The protein localises to the nucleus. The enzyme catalyses N(6)-acetyl-L-lysyl-[protein] + NAD(+) + H2O = 2''-O-acetyl-ADP-D-ribose + nicotinamide + L-lysyl-[protein]. In terms of biological role, NAD-dependent histone deacetylase, which could function in telomeric silencing, cell cycle progression and chromosome stability. In Emericella nidulans (strain FGSC A4 / ATCC 38163 / CBS 112.46 / NRRL 194 / M139) (Aspergillus nidulans), this protein is NAD-dependent protein deacetylase hst2-1.